The sequence spans 235 residues: Ribonuclease PH (235 aa).

Phosphate is bound by residues Arg86 and 124–126 (GTR).

Belongs to the RNase PH family. Homohexameric ring arranged as a trimer of dimers.

It carries out the reaction tRNA(n+1) + phosphate = tRNA(n) + a ribonucleoside 5'-diphosphate. Its function is as follows. Phosphorolytic 3'-5' exoribonuclease that plays an important role in tRNA 3'-end maturation. Removes nucleotide residues following the 3'-CCA terminus of tRNAs; can also add nucleotides to the ends of RNA molecules by using nucleoside diphosphates as substrates, but this may not be physiologically important. Probably plays a role in initiation of 16S rRNA degradation (leading to ribosome degradation) during starvation. The polypeptide is Ribonuclease PH (Francisella tularensis subsp. holarctica (strain FTNF002-00 / FTA)).